A 511-amino-acid chain; its full sequence is Small ribosomal subunit protein uS4m (511 aa).

Positions 202 to 272 (KRLDVVLYRS…IKNNLFSNIN (71 aa)) constitute an S4 RNA-binding domain.

Belongs to the universal ribosomal protein uS4 family.

The protein resides in the mitochondrion. The sequence is that of Small ribosomal subunit protein uS4m (RPS4) from Prototheca wickerhamii.